Reading from the N-terminus, the 177-residue chain is CRIB domain-containing protein RIC8 (177 aa).

One can recognise a CRIB domain in the interval 17-30 (IGTPTDVKHVAHIG). The segment covering 72 to 89 (STRSRDIPRLPKSSRERS) has biased composition (basic and acidic residues). A disordered region spans residues 72–177 (STRSRDIPRL…SSTSDAGYLT (106 aa)). The span at 158–171 (GSQVESISDSSSTS) shows a compositional bias: low complexity.

Functions as a downstream effector of Rho-related GTP binding proteins of the 'Rho of Plants' (ROPs) family. Participates in the propagation of ROP GTPase signals in specific cellular responses. This is CRIB domain-containing protein RIC8 (RIC8) from Arabidopsis thaliana (Mouse-ear cress).